We begin with the raw amino-acid sequence, 708 residues long: Fatty acid oxidation complex subunit alpha (708 aa).

The interval 1–190 (MSQDKAFTME…KAGLVTEVVP (190 aa)) is enoyl-CoA hydratase. Residues 310–708 (DSVKRVGVLG…MLENGWNFYQ (399 aa)) form a 3-hydroxyacyl-CoA dehydrogenase region.

This sequence in the N-terminal section; belongs to the enoyl-CoA hydratase/isomerase family. The protein in the central section; belongs to the 3-hydroxyacyl-CoA dehydrogenase family. In terms of assembly, heterotetramer of two alpha chains (FadJ) and two beta chains (FadI).

The protein localises to the cytoplasm. It catalyses the reaction a (3S)-3-hydroxyacyl-CoA = a (2E)-enoyl-CoA + H2O. It carries out the reaction a 4-saturated-(3S)-3-hydroxyacyl-CoA = a (3E)-enoyl-CoA + H2O. The enzyme catalyses a (3S)-3-hydroxyacyl-CoA + NAD(+) = a 3-oxoacyl-CoA + NADH + H(+). The catalysed reaction is (3S)-3-hydroxybutanoyl-CoA = (3R)-3-hydroxybutanoyl-CoA. The protein operates within lipid metabolism; fatty acid beta-oxidation. Its function is as follows. Catalyzes the formation of a hydroxyacyl-CoA by addition of water on enoyl-CoA. Also exhibits 3-hydroxyacyl-CoA epimerase and 3-hydroxyacyl-CoA dehydrogenase activities. The sequence is that of Fatty acid oxidation complex subunit alpha from Idiomarina loihiensis (strain ATCC BAA-735 / DSM 15497 / L2-TR).